We begin with the raw amino-acid sequence, 286 residues long: Ribosomal RNA small subunit methyltransferase H (286 aa).

S-adenosyl-L-methionine contacts are provided by residues 17 to 19, Asp36, Phe63, Asp84, and Gln91; that span reads AGH.

It belongs to the methyltransferase superfamily. RsmH family.

It localises to the cytoplasm. It catalyses the reaction cytidine(1402) in 16S rRNA + S-adenosyl-L-methionine = N(4)-methylcytidine(1402) in 16S rRNA + S-adenosyl-L-homocysteine + H(+). Functionally, specifically methylates the N4 position of cytidine in position 1402 (C1402) of 16S rRNA. This Metamycoplasma arthritidis (strain 158L3-1) (Mycoplasma arthritidis) protein is Ribosomal RNA small subunit methyltransferase H.